The following is a 238-amino-acid chain: Peroxisomal biogenesis factor 11 (238 aa).

The protein belongs to the peroxin-11 family.

Its subcellular location is the mitochondrion. It localises to the peroxisome membrane. Functionally, involved in peroxisomal proliferation. Promotes peroxisome division and biogenesis. This chain is Peroxisomal biogenesis factor 11 (pex11), found in Schizosaccharomyces pombe (strain 972 / ATCC 24843) (Fission yeast).